We begin with the raw amino-acid sequence, 337 residues long: Mannitol dehydrogenase (337 aa).

Zn(2+) is bound by residues cysteine 27, histidine 49, cysteine 80, cysteine 83, cysteine 86, cysteine 94, and cysteine 143.

The protein belongs to the zinc-containing alcohol dehydrogenase family. Zn(2+) serves as cofactor.

It carries out the reaction D-mannitol + NAD(+) = D-mannose + NADH + H(+). Functionally, oxidizes mannitol to mannose. Provides the initial step by which translocated mannitol is committed to central metabolism and, by regulating mannitol pool size, is important in regulating salt tolerance at the cellular level. The sequence is that of Mannitol dehydrogenase (ELI3) from Petroselinum crispum (Parsley).